We begin with the raw amino-acid sequence, 1170 residues long: Thrombospondin-1 (1170 aa).

The signal sequence occupies residues 1-18 (MELLRGLGVLFLLHMCGS). The heparin-binding stretch occupies residues 47 to 95 (RLVKGQDLSSPAFRIENANLIPAVPDDKFQDLLDAVWADKGFIFLASLR). Residues 56-270 (SPAFRIENAN…HKTKDLQAIC (215 aa)) form the Laminin G-like domain. A disulfide bond links C171 and C232. N-linked (GlcNAc...) asparagine glycosylation is found at N248 and N360. The 58-residue stretch at 316–373 (PLCFHNGVQYKNNEEWTVDSCTECHCQNSVTICKKVSCPIMPCSNATVPDGECCPRCW) folds into the VWFC domain. 3 TSP type-1 domains span residues 379–429 (DDGW…QECD), 435–490 (DGGW…DACP), and 492–547 (NGGW…QDCP). W385 carries C-linked (Man) tryptophan glycosylation. Intrachain disulfides connect C391–C423, C395–C428, and C406–C413. C-linked (Man) tryptophan glycosylation is found at W438 and W441. Disulfide bonds link C447–C484, C451–C489, and C462–C474. O-linked (Fuc...) threonine glycosylation is present at T450. Residue W498 is glycosylated (C-linked (Man) tryptophan). Disulfide bonds link C504-C541, C508-C546, C519-C531, C551-C562, C556-C572, C575-C586, C592-C608, C599-C617, C620-C644, C650-C663, C657-C676, C678-C689, C705-C713, C718-C738, C754-C774, C777-C797, C813-C833, C836-C856, C874-C894, C910-C930, and C946-C1167. T507 carries an O-linked (Fuc...) threonine glycan. Positions 531–1152 (CVGDVTENQV…YAGGRLGLFV (622 aa)) are involved in retention in extracellular matrix (ECM); involved in trimer formation. The EGF-like 1 domain maps to 547-587 (PIDGCLSNPCFAGAKCTSYPDGSWKCGACPPGYSGNGIQCK). An O-linked (Xyl) serine glycan is attached at S553. Positions 646–690 (PRNPCTDGTHDCNKNAKCNYLGHYSDPMYRCECKPGYAGNGIICG) constitute an EGF-like 2 domain. 8 TSP type-3 repeats span residues 691 to 726 (EDTD…NSGQ), 727 to 762 (EDYD…NPAQ), 763 to 785 (YDYD…NPDQ), 786 to 821 (ADTD…NVDQ), 822 to 844 (RDTD…NPDQ), 845 to 882 (LDSD…NANQ), 883 to 918 (ADHD…NPDQ), and 919 to 954 (KDSD…DISE). An N-linked (GlcNAc...) asparagine glycan is attached at N708. The disordered stretch occupies residues 840–934 (HNPDQLDSDS…GRGDACKDDF (95 aa)). Basic and acidic residues-rich tracts occupy residues 883–894 (ADHDKDGKGDAC) and 917–934 (DQKD…KDDF). The Cell attachment site motif lies at 926-928 (RGD). The TSP C-terminal domain maps to 958–1170 (RRFQMIPLDP…SDMKYECRDS (213 aa)). N1067 is a glycosylation site (N-linked (GlcNAc...) asparagine).

This sequence belongs to the thrombospondin family. Homotrimer; disulfide-linked. Can bind to fibrinogen, fibronectin, laminin, type V collagen and integrins alpha-V/beta-1, alpha-V/beta-3 and alpha-IIb/beta-3. Binds heparin. Interacts (via the C-terminal domain) with CD47. Interacts (via the TSP type I repeats) with CD36; the interaction conveys an antiangiogenic effect. Interacts (via the TSP type I repeats) with HRG; the interaction blocks the antiangiogenic effect of THBS1 with CD36. Interacts with ATF6 (via lumenal domain). Interacts with FN1; this interaction is enhanced by TNFAIP6, which may act as a bridging molecule between FN1 and THBS1. Interacts with SIRPA; the interaction stimulates phosphorylation of SIRPA.

It localises to the secreted. The protein resides in the cell surface. Its subcellular location is the extracellular space. The protein localises to the extracellular matrix. It is found in the endoplasmic reticulum. It localises to the sarcoplasmic reticulum. Adhesive glycoprotein that mediates cell-to-cell and cell-to-matrix interactions. Multifunctional, involved in inflammation, angiogenesis, wound healing, reactive oxygen species (ROS) signaling, nitrous oxide (NO) signaling, apoptosis, senescence, aging, cellular self-renewal, stemness, and cardiovascular and metabolic homeostasis. Negatively modulates dendritic cell activation and cytokine release, as part of an autocrine feedback loop, contributing to the resolution of inflammation and immune homeostasis. Ligand for receptor CD47. Modulates nitrous oxide (NO) signaling via CD47, hence playing a role as a pressor agent, supporting blood pressure. Plays a role in endothelial cell senescence, acting via CD47, by increasing the abundance and activation of NADPH oxidase NOX1, and so generating excess ROS. Inhibits stem cell self-renewal, acting via CD47 signaling, probably by regulation of the stem cell transcription factors POU5F1/OCT4, SOX2, MYC/c-Myc and KLF4. Negatively modulates wound healing, acting via CD47. Ligand for receptor CD36. Involved in inducing apoptosis in podocytes in response to elevated free fatty acids, acting via CD36. Plays a role in suppressing angiogenesis, acting, depending on context, via CD36 or CD47. Promotes cellular senescence in a TP53-CDKN1A-RB1 signaling-dependent manner. Ligand for immunoglobulin-like cell surface receptor SIRPA. Involved in ROS signaling in non-phagocytic cells, stimulating NADPH oxidase-derived ROS production, acting via interaction with SIRPA. Plays a role in metabolic dysfunction in diet-induced obesity, perhaps acting by exacerbating adipose inflammatory activity; its effects may be mediated, at least in part, through enhanced adipocyte proliferation. Plays a role in ER stress response, via its interaction with the activating transcription factor 6 alpha (ATF6) which produces adaptive ER stress response factors. May be involved in age-related conditions, including metabolic dysregulation, during normal aging. The polypeptide is Thrombospondin-1 (Thbs1) (Mus musculus (Mouse)).